Consider the following 356-residue polypeptide: Putative KilA-N domain-containing protein R878 (356 aa).

Residues 1-12 (MKVRKSNNKPLK) are compositionally biased toward basic residues. Residues 1 to 114 (MKVRKSNNKP…DDDGSDNNVY (114 aa)) are disordered. The span at 14–46 (SASFTSGTKTGSKSAKSVNSGSKSMKSTKSSSK) shows a compositional bias: low complexity. Residues 66–114 (SDNDELSDNEISDNESSDDDEISDNESSDDDEISDNEISDDDGSDNNVY) show a composition bias toward acidic residues. The 110-residue stretch at 130–239 (NYSKGKFGNF…VRIGFCMEEW (110 aa)) folds into the KilA-N domain.

The protein is Putative KilA-N domain-containing protein R878 of Acanthamoeba polyphaga (Amoeba).